Reading from the N-terminus, the 503-residue chain is Glutamate--tRNA ligase (503 aa).

The 'HIGH' region signature appears at 26–36; it reads PSPTGTPHVGL. Residues 126-148 form a disordered region; sequence TPEEVEARHRAAGRDPKLGYDNA. A compositionally biased stretch (basic and acidic residues) spans 130–148; that stretch reads VEARHRAAGRDPKLGYDNA. Residues 270 to 274 carry the 'KMSKS' region motif; it reads KLSKR. K273 provides a ligand contact to ATP.

The protein belongs to the class-I aminoacyl-tRNA synthetase family. Glutamate--tRNA ligase type 1 subfamily. As to quaternary structure, monomer.

The protein resides in the cytoplasm. It catalyses the reaction tRNA(Glu) + L-glutamate + ATP = L-glutamyl-tRNA(Glu) + AMP + diphosphate. Functionally, catalyzes the attachment of glutamate to tRNA(Glu) in a two-step reaction: glutamate is first activated by ATP to form Glu-AMP and then transferred to the acceptor end of tRNA(Glu). The sequence is that of Glutamate--tRNA ligase from Saccharopolyspora erythraea (strain ATCC 11635 / DSM 40517 / JCM 4748 / NBRC 13426 / NCIMB 8594 / NRRL 2338).